The following is a 126-amino-acid chain: Glycine cleavage system H protein (126 aa).

Residues 22 to 104 (VATIGITEYA…YEKAWMVKVE (83 aa)) form the Lipoyl-binding domain. N6-lipoyllysine is present on Lys-63.

It belongs to the GcvH family. In terms of assembly, the glycine cleavage system is composed of four proteins: P, T, L and H. (R)-lipoate is required as a cofactor.

Its function is as follows. The glycine cleavage system catalyzes the degradation of glycine. The H protein shuttles the methylamine group of glycine from the P protein to the T protein. Is also involved in protein lipoylation via its role as an octanoyl/lipoyl carrier protein intermediate. The polypeptide is Glycine cleavage system H protein (Staphylococcus aureus (strain MSSA476)).